Consider the following 128-residue polypeptide: Large-conductance mechanosensitive channel (128 aa).

2 helical membrane-spanning segments follow: residues 10–30 and 76–96; these read FAMR…SAFG and GLFI…FMMI.

The protein belongs to the MscL family. Homopentamer.

Its subcellular location is the cell inner membrane. Channel that opens in response to stretch forces in the membrane lipid bilayer. May participate in the regulation of osmotic pressure changes within the cell. This Haemophilus influenzae (strain PittEE) protein is Large-conductance mechanosensitive channel.